The following is an 804-amino-acid chain: Leucine--tRNA ligase (804 aa).

Positions 40 to 51 (PYPSGAGLHVGH) match the 'HIGH' region motif. Residues 576-580 (KMSKS) carry the 'KMSKS' region motif. K579 contributes to the ATP binding site.

The protein belongs to the class-I aminoacyl-tRNA synthetase family.

Its subcellular location is the cytoplasm. The catalysed reaction is tRNA(Leu) + L-leucine + ATP = L-leucyl-tRNA(Leu) + AMP + diphosphate. In Bacillus licheniformis (strain ATCC 14580 / DSM 13 / JCM 2505 / CCUG 7422 / NBRC 12200 / NCIMB 9375 / NCTC 10341 / NRRL NRS-1264 / Gibson 46), this protein is Leucine--tRNA ligase.